We begin with the raw amino-acid sequence, 554 residues long: Protein SINE2 (554 aa).

The ARMADILLO-type fold stretch occupies residues 17-290 (DKDPDSHKTA…MAAHETMRQA (274 aa)). 3 disordered regions span residues 306-332 (CKPR…VYSR), 411-442 (NESV…KHHR), and 465-487 (ETSS…TTED). Low complexity predominate over residues 311–321 (SLSGSVKSTSS). The span at 322-332 (LREHDGSVYSR) shows a compositional bias: basic and acidic residues. Residues 419–431 (NRSRSSRRNTKKR) show a composition bias toward basic residues. The segment covering 465-485 (ETSSSSSIYDTSGTTTPTNTT) has biased composition (low complexity). Residues 509–554 (LDPRLGRSKGVLKLGLSVFSIAVAGFASFMWMYLQDDMMPPHLVPT) form the KASH domain. Residues 522–542 (LGLSVFSIAVAGFASFMWMYL) traverse the membrane as a helical segment. Positions 551–554 (LVPT) match the Required for nuclear localization motif.

Interacts with SUN1 and SUN2. As to expression, expressed in epidermal cells, mesophyll cells, trichomes and root cells.

Its subcellular location is the nucleus membrane. Functionally, plays a role in innate immunity against the oomycete pathogen A.arabidopsidis (Hpa). This Arabidopsis thaliana (Mouse-ear cress) protein is Protein SINE2.